The following is a 97-amino-acid chain: Putative membrane protein insertion efficiency factor (97 aa).

The disordered stretch occupies residues 68–97 (VPGTELNTAPRSGQACNPTESTHSTTQTRH). Over residues 72–97 (ELNTAPRSGQACNPTESTHSTTQTRH) the composition is skewed to polar residues.

Belongs to the UPF0161 family.

The protein localises to the cell inner membrane. Functionally, could be involved in insertion of integral membrane proteins into the membrane. This chain is Putative membrane protein insertion efficiency factor, found in Marinobacter nauticus (strain ATCC 700491 / DSM 11845 / VT8) (Marinobacter aquaeolei).